The sequence spans 395 residues: MPIRTVMKANEAAAWAAKLAKPKVIAAFPITPSTLVPEKISEFVANGELDAEFIKVESEHSAISAVVGASAAGVRTFTATASQGLALMHEVLFIAAGMRLPIVMAIGNRSLSAPINIWNDWQDSISQRDTGWIQFYAENNQEALDLILLAYKVAEDERVLLPAMVGFDAFILTHTVEPVEIPDQEVVDEFLGEYEPKHAYLDPKRPITQGTLAFPAHYMEAKYLVWDAMEKARKVIDEAFAEFEKRFGRKYQKIEEYKTDDAEIIFVTMGSLAGTLKDWVDKKREEGYKVGAAKMTVYRPFPVEEIRALAKKAKVLGFIEKDISIGLYGAVFIDASAALVNESERPLMLDFIAGLGGRDVTFGQLDDALRIAEEALEKGEVEKPIHWIGLRKELL.

Heterotetramer of one alpha, one beta, one delta and one gamma chain.

It catalyses the reaction 2 oxidized [2Fe-2S]-[ferredoxin] + pyruvate + CoA = 2 reduced [2Fe-2S]-[ferredoxin] + acetyl-CoA + CO2 + H(+). The sequence is that of Pyruvate synthase subunit PorA (porA) from Pyrococcus horikoshii (strain ATCC 700860 / DSM 12428 / JCM 9974 / NBRC 100139 / OT-3).